The chain runs to 133 residues: p53 and DNA damage-regulated protein 1 (133 aa).

Belongs to the prefoldin subunit beta family. Component of the PAQosome complex which is responsible for the biogenesis of several protein complexes and which consists of R2TP complex members RUVBL1, RUVBL2, RPAP3 and PIH1D1, URI complex members PFDN2, PFDN6, PDRG1, UXT and URI1 as well as ASDURF, POLR2E and DNAAF10/WDR92.

The protein resides in the cytoplasm. Its function is as follows. May play a role in chaperone-mediated protein folding. This chain is p53 and DNA damage-regulated protein 1 (Pdrg1), found in Mus musculus (Mouse).